The chain runs to 591 residues: V-type ATP synthase alpha chain (591 aa).

242–249 lines the ATP pocket; it reads GPFGAGKT.

It belongs to the ATPase alpha/beta chains family.

It carries out the reaction ATP + H2O + 4 H(+)(in) = ADP + phosphate + 5 H(+)(out). Its function is as follows. Produces ATP from ADP in the presence of a proton gradient across the membrane. The V-type alpha chain is a catalytic subunit. This chain is V-type ATP synthase alpha chain, found in Chlamydia abortus (strain DSM 27085 / S26/3) (Chlamydophila abortus).